The sequence spans 461 residues: Probable ornithine decarboxylase (461 aa).

Positions 1 to 35 (MTGTKRNGEEVVNENNNNNVAEETNKKAKVDESST) are disordered. The segment covering 13-22 (NENNNNNVAE) has biased composition (low complexity). A compositionally biased stretch (basic and acidic residues) spans 23–32 (ETNKKAKVDE). Residue K116 is modified to N6-(pyridoxal phosphate)lysine. Pyridoxal 5'-phosphate-binding positions include S247, G284, and 317–320 (EPGR). 375–376 (FD) provides a ligand contact to substrate. The active-site Proton donor; shared with dimeric partner is C402. Residue D403 participates in substrate binding. A pyridoxal 5'-phosphate-binding site is contributed by Y431.

This sequence belongs to the Orn/Lys/Arg decarboxylase class-II family. In terms of assembly, homodimer. Only the dimer is catalytically active, as the active sites are constructed of residues from both monomers. Pyridoxal 5'-phosphate is required as a cofactor.

It carries out the reaction L-ornithine + H(+) = putrescine + CO2. It participates in amine and polyamine biosynthesis; putrescine biosynthesis via L-ornithine pathway; putrescine from L-ornithine: step 1/1. Inhibited by antizyme (AZ) in response to polyamine levels. AZ inhibits the assembly of the functional homodimer by binding to ODC monomers and targeting them for ubiquitin-independent proteolytic destruction by the 26S proteasome. Its function is as follows. Catalyzes the first and rate-limiting step of polyamine biosynthesis that converts ornithine into putrescine, which is the precursor for the polyamines, spermidine and spermine. Polyamines are essential for cell proliferation and are implicated in cellular processes, ranging from DNA replication to apoptosis. This Dictyostelium discoideum (Social amoeba) protein is Probable ornithine decarboxylase (odc).